The primary structure comprises 97 residues: Defective intron-associated endonuclease 3 (97 aa).

In terms of biological role, this endonuclease is specific to the nrdB gene splice junction and is involved in intron homing. In Escherichia coli (Bacteriophage T4), this protein is Defective intron-associated endonuclease 3 (ITEVIIIR).